A 92-amino-acid chain; its full sequence is Small ribosomal subunit protein uS19c (92 aa).

The protein belongs to the universal ribosomal protein uS19 family.

The protein resides in the plastid. Its subcellular location is the chloroplast. Its function is as follows. Protein S19 forms a complex with S13 that binds strongly to the 16S ribosomal RNA. This is Small ribosomal subunit protein uS19c from Eucalyptus globulus subsp. globulus (Tasmanian blue gum).